A 115-amino-acid chain; its full sequence is NADH-ubiquinone oxidoreductase chain 3 (115 aa).

Helical transmembrane passes span 3–23, 55–75, and 86–106; these read LMLT…IAFW, FFLV…LLPL, and TMLT…AYEW.

This sequence belongs to the complex I subunit 3 family. In terms of assembly, core subunit of respiratory chain NADH dehydrogenase (Complex I) which is composed of 45 different subunits. Interacts with TMEM186. Interacts with TMEM242.

Its subcellular location is the mitochondrion inner membrane. It carries out the reaction a ubiquinone + NADH + 5 H(+)(in) = a ubiquinol + NAD(+) + 4 H(+)(out). In terms of biological role, core subunit of the mitochondrial membrane respiratory chain NADH dehydrogenase (Complex I) which catalyzes electron transfer from NADH through the respiratory chain, using ubiquinone as an electron acceptor. Essential for the catalytic activity of complex I. The polypeptide is NADH-ubiquinone oxidoreductase chain 3 (Ceratotherium simum (White rhinoceros)).